The chain runs to 201 residues: Histidine biosynthesis bifunctional protein HisIE (201 aa).

Residues 1–114 are phosphoribosyl-AMP cyclohydrolase; it reads MLTAQQIEKL…FAPAQTEWGF (114 aa). The segment at 115–201 is phosphoribosyl-ATP pyrophosphohydrolase; that stretch reads LYQLEKLLAS…SCVIRRLRER (87 aa).

This sequence in the N-terminal section; belongs to the PRA-CH family. The protein in the C-terminal section; belongs to the PRA-PH family.

Its subcellular location is the cytoplasm. It catalyses the reaction 1-(5-phospho-beta-D-ribosyl)-ATP + H2O = 1-(5-phospho-beta-D-ribosyl)-5'-AMP + diphosphate + H(+). The enzyme catalyses 1-(5-phospho-beta-D-ribosyl)-5'-AMP + H2O = 1-(5-phospho-beta-D-ribosyl)-5-[(5-phospho-beta-D-ribosylamino)methylideneamino]imidazole-4-carboxamide. The protein operates within amino-acid biosynthesis; L-histidine biosynthesis; L-histidine from 5-phospho-alpha-D-ribose 1-diphosphate: step 2/9. It functions in the pathway amino-acid biosynthesis; L-histidine biosynthesis; L-histidine from 5-phospho-alpha-D-ribose 1-diphosphate: step 3/9. This chain is Histidine biosynthesis bifunctional protein HisIE, found in Photorhabdus laumondii subsp. laumondii (strain DSM 15139 / CIP 105565 / TT01) (Photorhabdus luminescens subsp. laumondii).